A 138-amino-acid chain; its full sequence is Sporulation-specific cell division protein SsgB (138 aa).

The protein belongs to the SsgA family. As to quaternary structure, monomer. Interacts with SsgA. Interacts with FtsZ (via N-terminus).

It is found in the cell septum. In terms of biological role, involved in sporulation-specific cell division. Required for early stages of sporulation. Important in the process of growth cessation prior to sporulation-specific cell division. Recruits cell division protein FtsZ to the future septum sites and tethers the contractile ring structure (Z ring) to the cytoplasmic membrane during sporulation. Stimulates polymerization and filament length of FtsZ in vitro. This chain is Sporulation-specific cell division protein SsgB, found in Thermobifida fusca (strain YX).